A 397-amino-acid polypeptide reads, in one-letter code: Chorismate synthase (397 aa).

NADP(+) contacts are provided by arginine 40 and arginine 46. Residues 129–131 (RSS), 257–258 (QA), glycine 302, 317–321 (KPISS), and arginine 343 contribute to the FMN site.

The protein belongs to the chorismate synthase family. In terms of assembly, homotetramer. FMNH2 serves as cofactor.

It carries out the reaction 5-O-(1-carboxyvinyl)-3-phosphoshikimate = chorismate + phosphate. It participates in metabolic intermediate biosynthesis; chorismate biosynthesis; chorismate from D-erythrose 4-phosphate and phosphoenolpyruvate: step 7/7. Its function is as follows. Catalyzes the anti-1,4-elimination of the C-3 phosphate and the C-6 proR hydrogen from 5-enolpyruvylshikimate-3-phosphate (EPSP) to yield chorismate, which is the branch point compound that serves as the starting substrate for the three terminal pathways of aromatic amino acid biosynthesis. This reaction introduces a second double bond into the aromatic ring system. This chain is Chorismate synthase, found in Chlorobium phaeovibrioides (strain DSM 265 / 1930) (Prosthecochloris vibrioformis (strain DSM 265)).